Here is a 185-residue protein sequence, read N- to C-terminus: Ribosome-recycling factor (185 aa).

The protein belongs to the RRF family.

The protein resides in the cytoplasm. Functionally, responsible for the release of ribosomes from messenger RNA at the termination of protein biosynthesis. May increase the efficiency of translation by recycling ribosomes from one round of translation to another. This is Ribosome-recycling factor from Acidothermus cellulolyticus (strain ATCC 43068 / DSM 8971 / 11B).